The sequence spans 693 residues: Polyribonucleotide nucleotidyltransferase (693 aa).

Residues Asp-486 and Asp-492 each coordinate Mg(2+). The KH domain maps to 553 to 612 (PRFSSMRIDTEKIKDVIGKGGATIRSITEQTGTTIEIEDDGSVKIAATDKAAAANARRLI). The region spanning 622–690 (GRIYDAKVTK…RQGRVRLSIK (69 aa)) is the S1 motif domain.

It belongs to the polyribonucleotide nucleotidyltransferase family. In terms of assembly, component of the RNA degradosome, which is a multiprotein complex involved in RNA processing and mRNA degradation. Mg(2+) is required as a cofactor.

The protein resides in the cytoplasm. It carries out the reaction RNA(n+1) + phosphate = RNA(n) + a ribonucleoside 5'-diphosphate. Involved in mRNA degradation. Catalyzes the phosphorolysis of single-stranded polyribonucleotides processively in the 3'- to 5'-direction. The polypeptide is Polyribonucleotide nucleotidyltransferase (Dichelobacter nodosus (strain VCS1703A)).